Reading from the N-terminus, the 146-residue chain is Large ribosomal subunit protein uL15 (146 aa).

A compositionally biased stretch (basic and acidic residues) spans 1 to 13 (MKLHELKPSEGSR). The interval 1–57 (MKLHELKPSEGSRKTRNRVGRGIGSGNGKTAGKGHKGQNARSGGGVRPGFEGGQMPL) is disordered. Composition is skewed to gly residues over residues 21-31 (RGIGSGNGKTA) and 42-52 (SGGGVRPGFEG).

The protein belongs to the universal ribosomal protein uL15 family. In terms of assembly, part of the 50S ribosomal subunit.

In terms of biological role, binds to the 23S rRNA. The chain is Large ribosomal subunit protein uL15 from Bacillus subtilis (strain 168).